The chain runs to 248 residues: Pathogenesis-related thaumatin-like protein 3.4 (248 aa).

Positions 1–25 are cleaved as a signal peptide; it reads MARAILWVLLTVMAVSLLLHAGVEG. Disulfide bonds link Cys-34-Cys-227, Cys-75-Cys-85, Cys-90-Cys-96, Cys-141-Cys-216, Cys-146-Cys-199, Cys-154-Cys-164, Cys-168-Cys-177, and Cys-178-Cys-186. Asn-235 carries N-linked (GlcNAc...) asparagine glycosylation.

Belongs to the thaumatin family. In terms of tissue distribution, mainly expressed in male and female strobili, and, at lower levels, in roots of seedlings and saplings.

Its function is as follows. May be involved in disease resistance. The protein is Pathogenesis-related thaumatin-like protein 3.4 of Cryptomeria japonica (Japanese cedar).